The sequence spans 225 residues: Cytidylate kinase (225 aa).

Position 12–20 (12–20) interacts with ATP; it reads GPSGAGKGT.

This sequence belongs to the cytidylate kinase family. Type 1 subfamily.

The protein localises to the cytoplasm. It catalyses the reaction CMP + ATP = CDP + ADP. It carries out the reaction dCMP + ATP = dCDP + ADP. In Stenotrophomonas maltophilia (strain R551-3), this protein is Cytidylate kinase.